Here is a 79-residue protein sequence, read N- to C-terminus: Acyl carrier protein (79 aa).

In terms of domain architecture, Carrier spans 2-77 (SSIEERVKKI…QAVDYINKHL (76 aa)). Ser-37 is modified (O-(pantetheine 4'-phosphoryl)serine).

Belongs to the acyl carrier protein (ACP) family. In terms of processing, 4'-phosphopantetheine is transferred from CoA to a specific serine of apo-ACP by AcpS. This modification is essential for activity because fatty acids are bound in thioester linkage to the sulfhydryl of the prosthetic group.

The protein localises to the cytoplasm. The protein operates within lipid metabolism; fatty acid biosynthesis. Functionally, carrier of the growing fatty acid chain in fatty acid biosynthesis. This Alkalilimnicola ehrlichii (strain ATCC BAA-1101 / DSM 17681 / MLHE-1) protein is Acyl carrier protein.